The following is a 72-amino-acid chain: U10-myrmicitoxin-Tb1a (72 aa).

An N-terminal signal peptide occupies residues 1–26; it reads MRVSYLSLTLTIVVVIAIIYAPETEA. Residues 27 to 36 constitute a propeptide that is removed on maturation; that stretch reads KAWADADAEA.

Belongs to the formicidae venom precursor-01 superfamily. In terms of tissue distribution, expressed by the venom gland.

It is found in the secreted. Its function is as follows. In vivo, this neurotoxin paralyzes about 40% of blowflies (L.caesar) one hour after intrathoracic injection, when tested at high doses (28 nmol/g). The sequence is that of U10-myrmicitoxin-Tb1a from Tetramorium bicarinatum (Tramp ant).